A 113-amino-acid chain; its full sequence is Hydrogenase maturation factor HypA (113 aa).

H2 provides a ligand contact to Ni(2+). Residues C73, C76, C89, and C92 each contribute to the Zn(2+) site.

Belongs to the HypA/HybF family.

In terms of biological role, involved in the maturation of [NiFe] hydrogenases. Required for nickel insertion into the metal center of the hydrogenase. This chain is Hydrogenase maturation factor HypA, found in Alkalilimnicola ehrlichii (strain ATCC BAA-1101 / DSM 17681 / MLHE-1).